Reading from the N-terminus, the 211-residue chain is Ribosomal RNA small subunit methyltransferase G (211 aa).

S-adenosyl-L-methionine contacts are provided by residues Gly-78, Met-83, 129-130 (AE), and Arg-144.

Belongs to the methyltransferase superfamily. RNA methyltransferase RsmG family.

The protein resides in the cytoplasm. The catalysed reaction is guanosine(527) in 16S rRNA + S-adenosyl-L-methionine = N(7)-methylguanosine(527) in 16S rRNA + S-adenosyl-L-homocysteine. Functionally, specifically methylates the N7 position of guanine in position 527 of 16S rRNA. This Pseudomonas syringae pv. tomato (strain ATCC BAA-871 / DC3000) protein is Ribosomal RNA small subunit methyltransferase G.